Consider the following 309-residue polypeptide: Homoserine O-acetyltransferase (309 aa).

Cysteine 142 (acyl-thioester intermediate) is an active-site residue. The substrate site is built by lysine 163 and serine 192. Catalysis depends on histidine 235, which acts as the Proton acceptor. The active site involves glutamate 237. Arginine 249 contributes to the substrate binding site.

This sequence belongs to the MetA family.

It localises to the cytoplasm. The catalysed reaction is L-homoserine + acetyl-CoA = O-acetyl-L-homoserine + CoA. The protein operates within amino-acid biosynthesis; L-methionine biosynthesis via de novo pathway; O-acetyl-L-homoserine from L-homoserine: step 1/1. In terms of biological role, transfers an acetyl group from acetyl-CoA to L-homoserine, forming acetyl-L-homoserine. This chain is Homoserine O-acetyltransferase, found in Allorhizobium ampelinum (strain ATCC BAA-846 / DSM 112012 / S4) (Agrobacterium vitis (strain S4)).